An 88-amino-acid chain; its full sequence is Small ribosomal subunit protein bS16 (88 aa).

Belongs to the bacterial ribosomal protein bS16 family.

This chain is Small ribosomal subunit protein bS16, found in Pelotomaculum thermopropionicum (strain DSM 13744 / JCM 10971 / SI).